The following is a 965-amino-acid chain: Transmembrane channel-like protein 5 (965 aa).

2 stretches are compositionally biased toward polar residues: residues 1-10 (MSSFHKNSSY) and 20-31 (SGSQNHTQNYLR). The interval 1-235 (MSSFHKNSSY…GAEEGDVYSP (235 aa)) is disordered. The Extracellular portion of the chain corresponds to 1–417 (MSSFHKNSSY…YFSFLRWLLK (417 aa)). Residues 61–70 (TNPDYHHSLA) are compositionally biased toward basic and acidic residues. The span at 166-181 (QGNSYHSGPRSHSNLP) shows a compositional bias: polar residues. The residue at position 248 (Ser248) is a Phosphoserine. A helical transmembrane segment spans residues 418 to 438 (FNIFSFVMNFSFIIIPQFTVG). Topologically, residues 439–444 (EKNTLQ) are cytoplasmic. The helical transmembrane segment at 445–467 (FTGLEFFTGAGYFRETVMYYGFY) threads the bilayer. The Extracellular portion of the chain corresponds to 468–484 (TNSTIRHRMGGASYNMQ). Residues 485-505 (LAYIFTIGACLVICFFSLLFS) form a helical membrane-spanning segment. The Cytoplasmic portion of the chain corresponds to 506 to 578 (MAKYFRNNFI…NQKLTRFSVH (73 aa)). The helical transmembrane segment at 579–599 (VAAWLVSTGITAACCVAVYYL) threads the bilayer. The Extracellular segment spans residues 600–613 (AEYNSEFLKTHKNP). The helical transmembrane segment at 614-634 (GAVLLLPFVVSCINLAVPRFY) threads the bilayer. The Cytoplasmic segment spans residues 635–657 (SMFRLVERYEIPRQEVYVLLIRN). A helical transmembrane segment spans residues 658 to 678 (IFLKISIVGILCYYWLNIVAL). The Extracellular portion of the chain corresponds to 679-691 (SGEECWETLIGQD). Residues 692–712 (IYRLLLMDFVFSLADSLLGEF) form a helical membrane-spanning segment. The Cytoplasmic segment spans residues 713-747 (LRRLIGMKFITSLSLQEFDIARNVLELIYAQTLAW). The helical transmembrane segment at 748–768 (LGIFFCPLLPFIQMITLFIMF) threads the bilayer. Over 769–794 (YVKNVSLMMNFQPPSKAWRASQMITF) the chain is Extracellular. The helical transmembrane segment at 795–815 (FIFLLFFPSFTGVLCTLAITI) threads the bilayer. The Cytoplasmic portion of the chain corresponds to 816-859 (WRLKPSADCGPFRGLPSFIQSIYSWIDTLSHRPGYLWVVWIYQN). The helical transmembrane segment at 860–880 (LIGSVHFFFILTLIVLIITYL) threads the bilayer. Over 881–965 (YWQITEGRKV…RSMQEENAIA (85 aa)) the chain is Extracellular.

Belongs to the TMC family.

It localises to the membrane. Its function is as follows. Probable component of an ion channel. Molecular function hasn't been characterized yet. In Rattus norvegicus (Rat), this protein is Transmembrane channel-like protein 5.